The primary structure comprises 80 residues: RNA-binding protein Hfq (80 aa).

Residues 10–69 enclose the Sm domain; sequence DPFLNLLRKEHVPVSIYLVNGIKLQGHIESFDQYVVLLRNTVTQMVYKHAISTVVPGRPV.

It belongs to the Hfq family. As to quaternary structure, homohexamer.

Its function is as follows. RNA chaperone that binds small regulatory RNA (sRNAs) and mRNAs to facilitate mRNA translational regulation in response to envelope stress, environmental stress and changes in metabolite concentrations. Also binds with high specificity to tRNAs. The polypeptide is RNA-binding protein Hfq (Leptothrix cholodnii (strain ATCC 51168 / LMG 8142 / SP-6) (Leptothrix discophora (strain SP-6))).